Here is a 260-residue protein sequence, read N- to C-terminus: Dehydrogenase/reductase SDR family member 11 (260 aa).

The N-terminal stretch at Met1–Ala30 is a signal peptide. NADP(+)-binding positions include Gly18 to Ile23, Arg43 to Thr44, Glu49, Asp70 to Leu71, and Asn97. Substrate-binding residues include Ser151 and Tyr166. NADP(+) contacts are provided by residues Tyr166, Lys170, Val201 to Gln204, and Lys208. Residue Tyr166 is the Proton acceptor of the active site.

The protein belongs to the short-chain dehydrogenases/reductases (SDR) family. As to quaternary structure, homotetramer.

The protein localises to the secreted. It catalyses the reaction a 3beta-hydroxysteroid + NADP(+) = a 3-oxosteroid + NADPH + H(+). It carries out the reaction 17beta-estradiol + NAD(+) = estrone + NADH + H(+). The enzyme catalyses 17beta-estradiol + NADP(+) = estrone + NADPH + H(+). The protein operates within steroid biosynthesis; estrogen biosynthesis. Its activity is regulated as follows. Inhibited by flavonoids including apigenin, luteolin, genistein, kaempferol and quercetin and also by carbenoxolone, zearalenone, glycyrrhetinic, curcumin and flufenamic acid. Its function is as follows. Catalyzes the conversion of the 17-keto group of estrone, 4- and 5-androstenes and 5-alpha-androstanes into their 17-beta-hydroxyl metabolites and the conversion of the 3-keto group of 3-, 3,17- and 3,20- diketosteroids into their 3-hydroxyl metabolites. Exhibits reductive 3-beta-hydroxysteroid dehydrogenase activity toward 5-beta-androstanes, 5-beta-pregnanes, 4-pregnenes and bile acids. May also reduce endogenous and exogenous alpha-dicarbonyl compounds and xenobiotic alicyclic ketones. The sequence is that of Dehydrogenase/reductase SDR family member 11 (Dhrs11) from Mus musculus (Mouse).